A 297-amino-acid polypeptide reads, in one-letter code: Probable ABC transporter phosphite binding protein PhnD1 (297 aa).

Residues 1 to 24 form the signal peptide; it reads MFNLKYFLVSSSLLFSVFSSPVFS.

This sequence belongs to the phosphate/phosphite/phosphonate binding protein family. In terms of assembly, the complex may be composed of two ATP-binding proteins (PhnC1), two transmembrane proteins (PhnE1) and a solute-binding protein (PhnD1).

It localises to the periplasm. Its function is as follows. Probably part of the ABC transporter complex PhnD1C1E1. Binds strongly to inorganic phosphite and with very weak affinities to methylphosphonate (MPn) and phosphate. This Prochlorococcus marinus (strain MIT 9301) protein is Probable ABC transporter phosphite binding protein PhnD1.